A 681-amino-acid polypeptide reads, in one-letter code: MSLVPPLPILSPPSSNSSTTAPPPLQTQPTTPSAPPPVTPPPSPPQSPPPVVSSSPPPPVVSSPPPSSSPPPSPPVITSPPPTVASSPPPPVVIASPPPSTPATTPPAPPQTVSPPPPPDASPSPPAPTTTNPPPKPSPSPPGETPSPPGETPSPPKPSPSTPTPTTTTSPPPPPATSASPPSSNPTDPSTLAPPPTPLPVVPREKPIAKPTGPASNNGNNTLPSSSPGKSEVGTGGIVAIGVIVGLVFLSLFVMGVWFTRKRKRKDPGTFVGYTMPPSAYSSPQGSDVVLFNSRSSAPPKMRSHSGSDYMYASSDSGMVSNQRSWFSYDELSQVTSGFSEKNLLGEGGFGCVYKGVLSDGREVAVKQLKIGGSQGEREFKAEVEIISRVHHRHLVTLVGYCISEQHRLLVYDYVPNNTLHYHLHAPGRPVMTWETRVRVAAGAARGIAYLHEDCHPRIIHRDIKSSNILLDNSFEALVADFGLAKIAQELDLNTHVSTRVMGTFGYMAPEYATSGKLSEKADVYSYGVILLELITGRKPVDTSQPLGDESLVEWARPLLGQAIENEEFDELVDPRLGKNFIPGEMFRMVEAAAACVRHSAAKRPKMSQVVRALDTLEEATDITNGMRPGQSQVFDSRQQSAQIRMFQRMAFGSQDYSSDFFDRSQSHSSWGSRDQSRFVP.

A compositionally biased stretch (pro residues) spans 1–11 (MSLVPPLPILS). The interval 1-231 (MSLVPPLPIL…TLPSSSPGKS (231 aa)) is disordered. The Extracellular portion of the chain corresponds to 1–237 (MSLVPPLPIL…PGKSEVGTGG (237 aa)). Residue asparagine 16 is glycosylated (N-linked (GlcNAc...) asparagine). The segment covering 21-163 (APPPLQTQPT…SPPKPSPSTP (143 aa)) has biased composition (pro residues). Over residues 177–191 (TSASPPSSNPTDPST) the composition is skewed to low complexity. Positions 192–201 (LAPPPTPLPV) are enriched in pro residues. Residues 214-229 (PASNNGNNTLPSSSPG) show a composition bias toward polar residues. An N-linked (GlcNAc...) asparagine glycan is attached at asparagine 220. A helical membrane pass occupies residues 238 to 258 (IVAIGVIVGLVFLSLFVMGVW). Residues 259–681 (FTRKRKRKDP…GSRDQSRFVP (423 aa)) are Cytoplasmic-facing. The Protein kinase domain maps to 339 to 617 (FSEKNLLGEG…SQVVRALDTL (279 aa)). ATP-binding positions include 345–353 (LGEGGFGCV) and lysine 367. Position 412 is a phosphotyrosine (tyrosine 412). Aspartate 463 functions as the Proton acceptor in the catalytic mechanism. 2 positions are modified to phosphoserine: serine 467 and serine 498. Phosphothreonine occurs at positions 499 and 504. Phosphotyrosine is present on tyrosine 512.

This sequence belongs to the protein kinase superfamily. Ser/Thr protein kinase family. Interacts with KIPK1 and KIPK2 (via its cytosolic domain). As to expression, mostly expressed in seedlings, roots, inflorescence bolts and flower buds.

It is found in the cell membrane. It catalyses the reaction L-seryl-[protein] + ATP = O-phospho-L-seryl-[protein] + ADP + H(+). The enzyme catalyses L-threonyl-[protein] + ATP = O-phospho-L-threonyl-[protein] + ADP + H(+). Could be involved in the negative regulation of root growth. This Arabidopsis thaliana (Mouse-ear cress) protein is Proline-rich receptor-like protein kinase PERK8 (PERK8).